A 430-amino-acid chain; its full sequence is Serine--tRNA ligase (430 aa).

Position 238–240 (T238–E240) interacts with L-serine. R269–E271 provides a ligand contact to ATP. L-serine is bound at residue E292. Residue E356–S359 coordinates ATP. S392 is a binding site for L-serine.

This sequence belongs to the class-II aminoacyl-tRNA synthetase family. Type-1 seryl-tRNA synthetase subfamily. Homodimer. The tRNA molecule binds across the dimer.

The protein localises to the cytoplasm. The catalysed reaction is tRNA(Ser) + L-serine + ATP = L-seryl-tRNA(Ser) + AMP + diphosphate + H(+). It catalyses the reaction tRNA(Sec) + L-serine + ATP = L-seryl-tRNA(Sec) + AMP + diphosphate + H(+). It participates in aminoacyl-tRNA biosynthesis; selenocysteinyl-tRNA(Sec) biosynthesis; L-seryl-tRNA(Sec) from L-serine and tRNA(Sec): step 1/1. Its function is as follows. Catalyzes the attachment of serine to tRNA(Ser). Is also able to aminoacylate tRNA(Sec) with serine, to form the misacylated tRNA L-seryl-tRNA(Sec), which will be further converted into selenocysteinyl-tRNA(Sec). This is Serine--tRNA ligase from Synechocystis sp. (strain ATCC 27184 / PCC 6803 / Kazusa).